We begin with the raw amino-acid sequence, 453 residues long: Acid phosphatase (453 aa).

An N-terminal signal peptide occupies residues 1–18 (MFLQNLFLGFLAVVCANA). Catalysis depends on His-69, which acts as the Nucleophile. N-linked (GlcNAc...) asparagine glycans are attached at residues Asn-95, Asn-151, Asn-183, Asn-193, Asn-243, and Asn-319. Residue Asp-331 is the Proton donor of the active site. Asn-410, Asn-429, and Asn-443 each carry an N-linked (GlcNAc...) asparagine glycan.

It belongs to the histidine acid phosphatase family.

The protein resides in the secreted. It localises to the cell wall. The enzyme catalyses a phosphate monoester + H2O = an alcohol + phosphate. The sequence is that of Acid phosphatase (pho1) from Schizosaccharomyces pombe (strain 972 / ATCC 24843) (Fission yeast).